A 116-amino-acid chain; its full sequence is MNFQVFSLIFFNFVYYCSCSTFEEALCELEKEERVKVLRCYEENTDPGILLYSKSFLSCLLDERASFITLNEMACGKTFSTNERRACFEEANVFLVNFTEEMKKKHKNAVKKCFDK.

Residues 1-19 form the signal peptide; sequence MNFQVFSLIFFNFVYYCSC.

In terms of processing, contains 3 disulfide bonds. In terms of tissue distribution, expressed by the venom gland.

The protein localises to the secreted. This Lychas mucronatus (Chinese swimming scorpion) protein is Venom protein 54.1.